Reading from the N-terminus, the 298-residue chain is Leucine-rich repeat-containing protein 55 (298 aa).

Positions 1–34 are cleaved as a signal peptide; it reads MGDTWAQLPWPGPPHSALLLVFFLLAAGVMHSDA. Residues 35-65 enclose the LRRNT domain; it reads GTSCPVLCTCRNQVVDCSNQRLFSVPPDLPM. Cystine bridges form between C38-C44 and C42-C51. LRR repeat units follow at residues 66-87, 90-111, 114-135, 138-160, and 163-186; these read DTRNLSLAHNRIAAVPPGYLTC, ELRVLDLRNNSLMELPPGLFLH, RLAHLDLSYNNLSHVPADMFRE, GLVHIDLSHNPWLRRVHPQAFQG, and HLRDLDLSYGGLAFLSLEALEGLP. The LRRCT domain occupies 196-251; sequence NPWVCGCTMEPLLKWLRNRIQRCTADSQLAECRGPPEVEGAPLFSLTEESFKACHL. Disulfide bonds link C200/C227 and C202/C249. The chain crosses the membrane as a helical span at residues 259 to 279; the sequence is LFIAFVGFVVSIASVATNFLL.

Interacts with KCNMA1.

It is found in the cell membrane. Auxiliary protein of the large-conductance, voltage and calcium-activated potassium channel (BK alpha). Modulates gating properties by producing a marked shift in the BK channel's voltage dependence of activation in the hyperpolarizing direction, and in the absence of calcium. This Mus musculus (Mouse) protein is Leucine-rich repeat-containing protein 55 (Lrrc55).